The primary structure comprises 584 residues: Aspartate--tRNA ligase (584 aa).

An L-aspartate-binding site is contributed by Glu-169. The tract at residues 193-196 is aspartate; that stretch reads QLFK. Arg-215 provides a ligand contact to L-aspartate. ATP-binding positions include 215–217 and Gln-224; that span reads RDE. L-aspartate is bound at residue His-446. An ATP-binding site is contributed by Glu-480. Residue Arg-487 coordinates L-aspartate. 532 to 535 lines the ATP pocket; the sequence is GLDR.

The protein belongs to the class-II aminoacyl-tRNA synthetase family. Type 1 subfamily. In terms of assembly, homodimer.

It is found in the cytoplasm. It carries out the reaction tRNA(Asp) + L-aspartate + ATP = L-aspartyl-tRNA(Asp) + AMP + diphosphate. In terms of biological role, catalyzes the attachment of L-aspartate to tRNA(Asp) in a two-step reaction: L-aspartate is first activated by ATP to form Asp-AMP and then transferred to the acceptor end of tRNA(Asp). The chain is Aspartate--tRNA ligase from Buchnera aphidicola subsp. Schizaphis graminum (strain Sg).